A 134-amino-acid chain; its full sequence is DNA polymerase III subunit psi (134 aa).

It belongs to the DNA polymerase III psi/HolD chain family. As to quaternary structure, DNA polymerase III contains a core (composed of alpha, epsilon and theta chains) that associates with a tau subunit. This core dimerizes to form the POLIII' complex. PolIII' associates with the gamma complex (composed of gamma, delta, delta', psi and chi chains) and with the beta chain to form the complete DNA polymerase III complex. Interacts directly with the chi subunit (holC).

It carries out the reaction DNA(n) + a 2'-deoxyribonucleoside 5'-triphosphate = DNA(n+1) + diphosphate. Functionally, part of the beta sliding clamp loading complex, which hydrolyzes ATP to load the beta clamp onto primed DNA to form the DNA replication pre-initiation complex. DNA polymerase III is a complex, multichain enzyme responsible for most of the replicative synthesis in bacteria. This DNA polymerase also exhibits 3' to 5' exonuclease activity. The sequence is that of DNA polymerase III subunit psi (holD) from Haemophilus influenzae (strain ATCC 51907 / DSM 11121 / KW20 / Rd).